The following is a 438-amino-acid chain: ATP-dependent RNA helicase RhlB (438 aa).

Positions 9-37 (QRFADLPLHPEVKQALAENGFEFCTPIQA) match the Q motif motif. Residues 40 to 219 (LPVLLQSKDI…YDHMNEPVKV (180 aa)) form the Helicase ATP-binding domain. 53–60 (AQTGTGKT) lines the ATP pocket. The short motif at 165–168 (DEAD) is the DEAD box element. A Helicase C-terminal domain is found at 243–390 (KMRLLLTLIE…VSNYDSEALL (148 aa)). The segment at 395 to 438 (TPAKIHRKHPSGTRNLRDRSGTSRPGAQRSGARPPRHDRTRRHS) is disordered. Over residues 428 to 438 (PPRHDRTRRHS) the composition is skewed to basic residues.

It belongs to the DEAD box helicase family. RhlB subfamily. In terms of assembly, component of the RNA degradosome, which is a multiprotein complex involved in RNA processing and mRNA degradation.

Its subcellular location is the cytoplasm. The catalysed reaction is ATP + H2O = ADP + phosphate + H(+). Its function is as follows. DEAD-box RNA helicase involved in RNA degradation. Has RNA-dependent ATPase activity and unwinds double-stranded RNA. The protein is ATP-dependent RNA helicase RhlB of Shewanella baltica (strain OS223).